Here is a 515-residue protein sequence, read N- to C-terminus: Histidine ammonia-lyase (515 aa).

A cross-link (5-imidazolinone (Ala-Gly)) is located at residues 145–147; it reads ASG. Ser-146 is modified (2,3-didehydroalanine (Ser)).

The protein belongs to the PAL/histidase family. Post-translationally, contains an active site 4-methylidene-imidazol-5-one (MIO), which is formed autocatalytically by cyclization and dehydration of residues Ala-Ser-Gly.

It is found in the cytoplasm. It carries out the reaction L-histidine = trans-urocanate + NH4(+). The protein operates within amino-acid degradation; L-histidine degradation into L-glutamate; N-formimidoyl-L-glutamate from L-histidine: step 1/3. The protein is Histidine ammonia-lyase of Gluconacetobacter diazotrophicus (strain ATCC 49037 / DSM 5601 / CCUG 37298 / CIP 103539 / LMG 7603 / PAl5).